Consider the following 202-residue polypeptide: Large ribosomal subunit protein bL9 (202 aa).

A disordered region spans residues 177-202 (AGEFFDPEAEPDDVAEAGGEQTAEEK). Residues 181–191 (FDPEAEPDDVA) show a composition bias toward acidic residues.

The protein belongs to the bacterial ribosomal protein bL9 family.

In terms of biological role, binds to the 23S rRNA. This chain is Large ribosomal subunit protein bL9, found in Nitrobacter hamburgensis (strain DSM 10229 / NCIMB 13809 / X14).